The sequence spans 727 residues: NADH-ubiquinone oxidoreductase 75 kDa subunit, mitochondrial (727 aa).

The transit peptide at 1-23 (MLRIPVKRALIGLSKSPKGYVRS) directs the protein to the mitochondrion. Residues 30 to 108 (NLIEVFVDGQ…GWNILTNSEK (79 aa)) form the 2Fe-2S ferredoxin-type domain. The [2Fe-2S] cluster site is built by C64, C75, and C78. An N6-acetyllysine modification is found at K84. Residue C92 participates in [2Fe-2S] cluster binding. One can recognise a 4Fe-4S His(Cys)3-ligated-type domain in the interval 108–147 (KSKKAREGVMEFLLANHPLDCPICDQGGECDLQDQSMMFG). The [4Fe-4S] cluster site is built by H124, C128, C131, C137, C176, C179, C182, and C226. Residues 245 to 301 (TRKTESIDVMDAVGSNIVVSTRTGEVMRILPRMHEDINEEWISDKTRFAYDGLKRQR) enclose the 4Fe-4S Mo/W bis-MGD-type domain. Residues K499 and K709 each carry the N6-acetyllysine modification.

It belongs to the complex I 75 kDa subunit family. Core subunit of respiratory chain NADH dehydrogenase (Complex I) which is composed of 45 different subunits. This is the largest subunit of complex I and it is a component of the iron-sulfur (IP) fragment of the enzyme. Complex I associates with ubiquinol-cytochrome reductase complex (Complex III) to form supercomplexes. Interacts with MDM2 and AKAP1. [2Fe-2S] cluster serves as cofactor. Requires [4Fe-4S] cluster as cofactor.

It localises to the mitochondrion inner membrane. The catalysed reaction is a ubiquinone + NADH + 5 H(+)(in) = a ubiquinol + NAD(+) + 4 H(+)(out). Its function is as follows. Core subunit of the mitochondrial membrane respiratory chain NADH dehydrogenase (Complex I) which catalyzes electron transfer from NADH through the respiratory chain, using ubiquinone as an electron acceptor. Essential for catalysing the entry and efficient transfer of electrons within complex I. Plays a key role in the assembly and stability of complex I and participates in the association of complex I with ubiquinol-cytochrome reductase complex (Complex III) to form supercomplexes. The sequence is that of NADH-ubiquinone oxidoreductase 75 kDa subunit, mitochondrial (Ndufs1) from Rattus norvegicus (Rat).